Reading from the N-terminus, the 407-residue chain is Imidazolonepropionase (407 aa).

Residues His-75 and His-77 each contribute to the Fe(3+) site. Residues His-75 and His-77 each coordinate Zn(2+). 4-imidazolone-5-propanoate is bound by residues Arg-84, Tyr-147, and His-180. Tyr-147 lines the N-formimidoyl-L-glutamate pocket. His-245 lines the Fe(3+) pocket. His-245 contributes to the Zn(2+) binding site. Gln-248 serves as a coordination point for 4-imidazolone-5-propanoate. Asp-320 contacts Fe(3+). Asp-320 provides a ligand contact to Zn(2+). Residues Asn-322 and Gly-324 each coordinate N-formimidoyl-L-glutamate. Position 325 (Ser-325) interacts with 4-imidazolone-5-propanoate.

It belongs to the metallo-dependent hydrolases superfamily. HutI family. The cofactor is Zn(2+). Requires Fe(3+) as cofactor.

It is found in the cytoplasm. The catalysed reaction is 4-imidazolone-5-propanoate + H2O = N-formimidoyl-L-glutamate. Its pathway is amino-acid degradation; L-histidine degradation into L-glutamate; N-formimidoyl-L-glutamate from L-histidine: step 3/3. Functionally, catalyzes the hydrolytic cleavage of the carbon-nitrogen bond in imidazolone-5-propanoate to yield N-formimidoyl-L-glutamate. It is the third step in the universal histidine degradation pathway. This Pseudoalteromonas atlantica (strain T6c / ATCC BAA-1087) protein is Imidazolonepropionase.